Here is a 379-residue protein sequence, read N- to C-terminus: Queuine tRNA-ribosyltransferase (379 aa).

The active-site Proton acceptor is aspartate 94. Substrate-binding positions include 94–98, aspartate 148, glutamine 191, and glycine 218; that span reads DSGGF. The interval 249 to 255 is RNA binding; the sequence is GVGSPDS. Aspartate 268 functions as the Nucleophile in the catalytic mechanism. Residues 273-277 are RNA binding; important for wobble base 34 recognition; the sequence is TRIAR. Cysteine 306, cysteine 308, cysteine 311, and histidine 337 together coordinate Zn(2+).

This sequence belongs to the queuine tRNA-ribosyltransferase family. Homodimer. Within each dimer, one monomer is responsible for RNA recognition and catalysis, while the other monomer binds to the replacement base PreQ1. Zn(2+) is required as a cofactor.

The enzyme catalyses 7-aminomethyl-7-carbaguanine + guanosine(34) in tRNA = 7-aminomethyl-7-carbaguanosine(34) in tRNA + guanine. Its pathway is tRNA modification; tRNA-queuosine biosynthesis. Catalyzes the base-exchange of a guanine (G) residue with the queuine precursor 7-aminomethyl-7-deazaguanine (PreQ1) at position 34 (anticodon wobble position) in tRNAs with GU(N) anticodons (tRNA-Asp, -Asn, -His and -Tyr). Catalysis occurs through a double-displacement mechanism. The nucleophile active site attacks the C1' of nucleotide 34 to detach the guanine base from the RNA, forming a covalent enzyme-RNA intermediate. The proton acceptor active site deprotonates the incoming PreQ1, allowing a nucleophilic attack on the C1' of the ribose to form the product. After dissociation, two additional enzymatic reactions on the tRNA convert PreQ1 to queuine (Q), resulting in the hypermodified nucleoside queuosine (7-(((4,5-cis-dihydroxy-2-cyclopenten-1-yl)amino)methyl)-7-deazaguanosine). The protein is Queuine tRNA-ribosyltransferase of Halalkalibacterium halodurans (strain ATCC BAA-125 / DSM 18197 / FERM 7344 / JCM 9153 / C-125) (Bacillus halodurans).